A 233-amino-acid chain; its full sequence is Small ribosomal subunit protein uS5 (233 aa).

Basic and acidic residues-rich tracts occupy residues 1-12 (MANESEIQKTEN) and 39-54 (RGRDGRGRRDDRRNEE). The segment at 1–54 (MANESEIQKTENAEVANAANGTNPNNERRGRGGRGRGGRGRDGRGRRDDRRNEE) is disordered. The S5 DRBM domain maps to 59 to 122 (LIEKLVHINR…AAAKKTMIRV (64 aa)).

Belongs to the universal ribosomal protein uS5 family. Part of the 30S ribosomal subunit. Contacts proteins S4 and S8.

Its function is as follows. With S4 and S12 plays an important role in translational accuracy. Functionally, located at the back of the 30S subunit body where it stabilizes the conformation of the head with respect to the body. In Zymomonas mobilis subsp. mobilis (strain ATCC 31821 / ZM4 / CP4), this protein is Small ribosomal subunit protein uS5.